The sequence spans 226 residues: Protein Thf1 (226 aa).

A coiled-coil region spans residues 183–213 (EEKMQKDLDLYRSNLEKMDQLLTVIEEALQA).

It belongs to the THF1 family.

Functionally, may be involved in photosynthetic membrane biogenesis. This is Protein Thf1 from Gloeothece citriformis (strain PCC 7424) (Cyanothece sp. (strain PCC 7424)).